Reading from the N-terminus, the 542-residue chain is Glucans biosynthesis protein G (542 aa).

The first 34 residues, 1–34, serve as a signal peptide directing secretion; the sequence is MVSLLRCPSSKPYSSLICSLTLGAVVALSGVAYA.

The protein belongs to the OpgD/OpgG family.

The protein localises to the periplasm. The protein operates within glycan metabolism; osmoregulated periplasmic glucan (OPG) biosynthesis. Functionally, involved in the biosynthesis of osmoregulated periplasmic glucans (OPGs). The sequence is that of Glucans biosynthesis protein G from Shewanella baltica (strain OS155 / ATCC BAA-1091).